We begin with the raw amino-acid sequence, 604 residues long: Acetylcholinesterase 4 (604 aa).

An N-terminal signal peptide occupies residues Met-1–Ala-23. An intrachain disulfide couples Cys-88 to Cys-115. N-linked (GlcNAc...) asparagine glycans are attached at residues Asn-96 and Asn-128. Ser-219 serves as the catalytic Acyl-ester intermediate. Cys-273 and Cys-284 are joined by a disulfide. N-linked (GlcNAc...) asparagine glycosylation is found at Asn-274 and Asn-299. The Charge relay system role is filled by Glu-347. 2 N-linked (GlcNAc...) asparagine glycosylation sites follow: Asn-400 and Asn-446. Cys-426 and Cys-561 are joined by a disulfide. The active-site Charge relay system is the His-477.

The protein belongs to the type-B carboxylesterase/lipase family.

The protein localises to the synapse. Its subcellular location is the secreted. It localises to the cell membrane. The catalysed reaction is acetylcholine + H2O = choline + acetate + H(+). Rapidly hydrolyzes choline released into the synapse. This Caenorhabditis briggsae protein is Acetylcholinesterase 4 (ace-4).